The chain runs to 95 residues: uncharacterized protein (95 aa).

The first 22 residues, 1-22 (MLPGFTMIITSLLLTFFREVEH), serve as a signal peptide directing secretion. Topologically, residues 23 to 52 (LLPECLTITNTPQRTLVLIQRFTLLQKVMT) are extracellular. The helical transmembrane segment at 53–69 (IHLLLSIGTLGSLFTLH) threads the bilayer. Over 70 to 95 (PQLLKTNLLQKLHKELNSNLDYLISC) the chain is Cytoplasmic.

It is found in the host membrane. This is an uncharacterized protein from Acidianus bottle-shaped virus (isolate Italy/Pozzuoli) (ABV).